The sequence spans 424 residues: UDP-N-acetylglucosamine 1-carboxyvinyltransferase (424 aa).

22-23 contacts phosphoenolpyruvate; that stretch reads KN. R93 is a UDP-N-acetyl-alpha-D-glucosamine binding site. C117 (proton donor) is an active-site residue. C117 bears the 2-(S-cysteinyl)pyruvic acid O-phosphothioketal mark. UDP-N-acetyl-alpha-D-glucosamine contacts are provided by residues 122–126, 164–166, D307, and I329; these read RPVDL and SVG.

Belongs to the EPSP synthase family. MurA subfamily.

The protein localises to the cytoplasm. It carries out the reaction phosphoenolpyruvate + UDP-N-acetyl-alpha-D-glucosamine = UDP-N-acetyl-3-O-(1-carboxyvinyl)-alpha-D-glucosamine + phosphate. Its pathway is cell wall biogenesis; peptidoglycan biosynthesis. Functionally, cell wall formation. Adds enolpyruvyl to UDP-N-acetylglucosamine. The polypeptide is UDP-N-acetylglucosamine 1-carboxyvinyltransferase (Haemophilus influenzae (strain ATCC 51907 / DSM 11121 / KW20 / Rd)).